Reading from the N-terminus, the 274-residue chain is NAD-dependent protein deacetylase (274 aa).

Residues 1-274 (MDSRMSDLQA…CDEVLAEVVS (274 aa)) enclose the Deacetylase sirtuin-type domain. Residues 26-46 (GAGCSTASGIPDYRDGQGQWK) and 104-107 (QNVD) contribute to the NAD(+) site. The active-site Proton acceptor is H122. Residues C130, C133, C181, and C184 each contribute to the Zn(2+) site. NAD(+)-binding positions include 221 to 223 (GSS), 247 to 249 (NLG), and C265.

This sequence belongs to the sirtuin family. Class II subfamily. The cofactor is Zn(2+).

It localises to the cytoplasm. It catalyses the reaction N(6)-acetyl-L-lysyl-[protein] + NAD(+) + H2O = 2''-O-acetyl-ADP-D-ribose + nicotinamide + L-lysyl-[protein]. Its function is as follows. NAD-dependent protein deacetylase which modulates the activities of several enzymes which are inactive in their acetylated form. The chain is NAD-dependent protein deacetylase from Bordetella bronchiseptica (strain ATCC BAA-588 / NCTC 13252 / RB50) (Alcaligenes bronchisepticus).